The following is a 401-amino-acid chain: Argininosuccinate synthase (401 aa).

9–17 (AYSGGLDTS) is a binding site for ATP. Position 88 (Tyr88) interacts with L-citrulline. Gly118 is a binding site for ATP. 3 residues coordinate L-aspartate: Thr120, Asn124, and Asp125. Asn124 is a binding site for L-citrulline. Positions 128, 177, 186, 262, and 274 each coordinate L-citrulline.

The protein belongs to the argininosuccinate synthase family. Type 1 subfamily. As to quaternary structure, homotetramer.

It localises to the cytoplasm. The catalysed reaction is L-citrulline + L-aspartate + ATP = 2-(N(omega)-L-arginino)succinate + AMP + diphosphate + H(+). It functions in the pathway amino-acid biosynthesis; L-arginine biosynthesis; L-arginine from L-ornithine and carbamoyl phosphate: step 2/3. In Chlorobaculum parvum (strain DSM 263 / NCIMB 8327) (Chlorobium vibrioforme subsp. thiosulfatophilum), this protein is Argininosuccinate synthase.